We begin with the raw amino-acid sequence, 165 residues long: MKNKVFLIGMPGCGKSTIGELISKELLLKFIDMDIYIEEKTSKTISELFEQGEDYFRDIESEACKEIIKYDNVVIATGGGVVKKGINVETLKNNGLVIFIDRPVEKIISDIDVSRRPLLKNGKERIIGLYKERYDIYNKACHKIVVNDGTIDEVIEEIKKIIINN.

Gly12 to Thr17 lines the ATP pocket. Residue Ser16 participates in Mg(2+) binding. 3 residues coordinate substrate: Asp34, Arg57, and Gly79. Arg116 serves as a coordination point for ATP. Arg133 serves as a coordination point for substrate.

Belongs to the shikimate kinase family. Monomer. Mg(2+) serves as cofactor.

The protein localises to the cytoplasm. The enzyme catalyses shikimate + ATP = 3-phosphoshikimate + ADP + H(+). Its pathway is metabolic intermediate biosynthesis; chorismate biosynthesis; chorismate from D-erythrose 4-phosphate and phosphoenolpyruvate: step 5/7. Its function is as follows. Catalyzes the specific phosphorylation of the 3-hydroxyl group of shikimic acid using ATP as a cosubstrate. The sequence is that of Shikimate kinase from Clostridium botulinum (strain Alaska E43 / Type E3).